A 526-amino-acid polypeptide reads, in one-letter code: ATP synthase subunit alpha (526 aa).

171-178 (GDRQVGKT) provides a ligand contact to ATP.

The protein belongs to the ATPase alpha/beta chains family. F-type ATPases have 2 components, CF(1) - the catalytic core - and CF(0) - the membrane proton channel. CF(1) has five subunits: alpha(3), beta(3), gamma(1), delta(1), epsilon(1). CF(0) has three main subunits: a(1), b(2) and c(9-12). The alpha and beta chains form an alternating ring which encloses part of the gamma chain. CF(1) is attached to CF(0) by a central stalk formed by the gamma and epsilon chains, while a peripheral stalk is formed by the delta and b chains.

It is found in the cell inner membrane. The enzyme catalyses ATP + H2O + 4 H(+)(in) = ADP + phosphate + 5 H(+)(out). Produces ATP from ADP in the presence of a proton gradient across the membrane. The alpha chain is a regulatory subunit. This is ATP synthase subunit alpha from Azobacteroides pseudotrichonymphae genomovar. CFP2.